The following is a 102-amino-acid chain: Large ribosomal subunit protein bL21 (102 aa).

Belongs to the bacterial ribosomal protein bL21 family. Part of the 50S ribosomal subunit. Contacts protein L20.

Functionally, this protein binds to 23S rRNA in the presence of protein L20. The sequence is that of Large ribosomal subunit protein bL21 from Listeria innocua serovar 6a (strain ATCC BAA-680 / CLIP 11262).